Reading from the N-terminus, the 304-residue chain is Probable 5-dehydro-4-deoxyglucarate dehydratase (304 aa).

Belongs to the DapA family.

The catalysed reaction is 5-dehydro-4-deoxy-D-glucarate + H(+) = 2,5-dioxopentanoate + CO2 + H2O. It functions in the pathway carbohydrate acid metabolism; D-glucarate degradation; 2,5-dioxopentanoate from D-glucarate: step 2/2. The sequence is that of Probable 5-dehydro-4-deoxyglucarate dehydratase from Pseudarthrobacter chlorophenolicus (strain ATCC 700700 / DSM 12829 / CIP 107037 / JCM 12360 / KCTC 9906 / NCIMB 13794 / A6) (Arthrobacter chlorophenolicus).